A 152-amino-acid chain; its full sequence is D-aminoacyl-tRNA deacylase (152 aa).

A Gly-cisPro motif, important for rejection of L-amino acids motif is present at residues 142-143 (GP).

It belongs to the DTD family. In terms of assembly, homodimer.

The protein localises to the cytoplasm. The catalysed reaction is glycyl-tRNA(Ala) + H2O = tRNA(Ala) + glycine + H(+). It carries out the reaction a D-aminoacyl-tRNA + H2O = a tRNA + a D-alpha-amino acid + H(+). An aminoacyl-tRNA editing enzyme that deacylates mischarged D-aminoacyl-tRNAs. Also deacylates mischarged glycyl-tRNA(Ala), protecting cells against glycine mischarging by AlaRS. Acts via tRNA-based rather than protein-based catalysis; rejects L-amino acids rather than detecting D-amino acids in the active site. By recycling D-aminoacyl-tRNA to D-amino acids and free tRNA molecules, this enzyme counteracts the toxicity associated with the formation of D-aminoacyl-tRNA entities in vivo and helps enforce protein L-homochirality. The sequence is that of D-aminoacyl-tRNA deacylase from Burkholderia vietnamiensis (strain G4 / LMG 22486) (Burkholderia cepacia (strain R1808)).